We begin with the raw amino-acid sequence, 338 residues long: tRNA methyltransferase 10 homolog A (338 aa).

Disordered stretches follow at residues 1–91 (MSSE…DRKR) and 296–338 (RVEG…SVPH). Position 22 is a phosphoserine (Ser22). A coiled-coil region spans residues 52–80 (KQWEEQRELRKQKRKEKRKRKQLERQCQP). Residues 61–73 (RKQKRKEKRKRKQ) show a composition bias toward basic residues. An SAM-dependent MTase TRM10-type domain is found at 88–279 (DRKRIRRDVV…TILPQRKGAV (192 aa)). Residues 308 to 328 (EENRHELDSTHEEEKQDKENS) are compositionally biased toward basic and acidic residues. The span at 329–338 (TESTVNSVPH) shows a compositional bias: polar residues. Ser335 carries the phosphoserine modification.

Belongs to the class IV-like SAM-binding methyltransferase superfamily. TRM10 family. In terms of assembly, interacts with tRNA.

It is found in the nucleus. It localises to the nucleolus. The catalysed reaction is guanosine(9) in tRNA + S-adenosyl-L-methionine = N(1)-methylguanosine(9) in tRNA + S-adenosyl-L-homocysteine + H(+). In terms of biological role, S-adenosyl-L-methionine-dependent guanine N(1)-methyltransferase that catalyzes the formation of N(1)-methylguanine at position 9 (m1G9) in tRNAs. Probably not able to catalyze formation of N(1)-methyladenine at position 9 (m1A9) in tRNAs. The protein is tRNA methyltransferase 10 homolog A (TRMT10A) of Bos taurus (Bovine).